The sequence spans 65 residues: Large ribosomal subunit protein bL35 (65 aa).

The tract at residues 1 to 26 (MPKIKTLRSAAKRFKKTESGKFKRKQ) is disordered.

This sequence belongs to the bacterial ribosomal protein bL35 family.

The protein is Large ribosomal subunit protein bL35 of Buchnera aphidicola subsp. Baizongia pistaciae (strain Bp).